The chain runs to 398 residues: S-adenosylmethionine synthase (398 aa).

Histidine 19 contributes to the ATP binding site. Mg(2+) is bound at residue aspartate 21. Glutamate 47 provides a ligand contact to K(+). The L-methionine site is built by glutamate 60 and glutamine 103. The tract at residues 103 to 113 is flexible loop; sequence QSPDIAQGVDV. ATP contacts are provided by residues 177–179, 243–244, aspartate 252, 258–259, alanine 275, and lysine 279; these read DGK, RF, and RK. Residue aspartate 252 coordinates L-methionine. Lysine 283 provides a ligand contact to L-methionine.

Belongs to the AdoMet synthase family. As to quaternary structure, homotetramer; dimer of dimers. Mg(2+) is required as a cofactor. It depends on K(+) as a cofactor.

It localises to the cytoplasm. The enzyme catalyses L-methionine + ATP + H2O = S-adenosyl-L-methionine + phosphate + diphosphate. It functions in the pathway amino-acid biosynthesis; S-adenosyl-L-methionine biosynthesis; S-adenosyl-L-methionine from L-methionine: step 1/1. Catalyzes the formation of S-adenosylmethionine (AdoMet) from methionine and ATP. The overall synthetic reaction is composed of two sequential steps, AdoMet formation and the subsequent tripolyphosphate hydrolysis which occurs prior to release of AdoMet from the enzyme. This is S-adenosylmethionine synthase from Symbiobacterium thermophilum (strain DSM 24528 / JCM 14929 / IAM 14863 / T).